A 138-amino-acid polypeptide reads, in one-letter code: Large ribosomal subunit protein uL16 (138 aa).

Belongs to the universal ribosomal protein uL16 family. In terms of assembly, part of the 50S ribosomal subunit.

Binds 23S rRNA and is also seen to make contacts with the A and possibly P site tRNAs. This is Large ribosomal subunit protein uL16 from Chlamydia felis (strain Fe/C-56) (Chlamydophila felis).